We begin with the raw amino-acid sequence, 530 residues long: Autoinducer-2 kinase (530 aa).

This sequence belongs to the FGGY kinase family.

Its subcellular location is the cytoplasm. The catalysed reaction is (S)-4,5-dihydroxypentane-2,3-dione + ATP = (2S)-2-hydroxy-3,4-dioxopentyl phosphate + ADP + H(+). In terms of biological role, catalyzes the phosphorylation of autoinducer-2 (AI-2) to phospho-AI-2, which subsequently inactivates the transcriptional regulator LsrR and leads to the transcription of the lsr operon. Phosphorylates the ring-open form of (S)-4,5-dihydroxypentane-2,3-dione (DPD), which is the precursor to all AI-2 signaling molecules, at the C5 position. The chain is Autoinducer-2 kinase from Photorhabdus laumondii subsp. laumondii (strain DSM 15139 / CIP 105565 / TT01) (Photorhabdus luminescens subsp. laumondii).